Reading from the N-terminus, the 120-residue chain is MARIAGVNIPNHKHAEIALTAIYGIGRSRAQKICDAANVVRSVKMKDLTESDMERLRDEVAKFIVEGDLRRETTMNIKRLMDLGCYRGVRHRRGLPLRGQRTRTNARTRKGPRKAIAGKK.

The tract at residues 94 to 120 is disordered; it reads GLPLRGQRTRTNARTRKGPRKAIAGKK.

It belongs to the universal ribosomal protein uS13 family. In terms of assembly, part of the 30S ribosomal subunit. Forms a loose heterodimer with protein S19. Forms two bridges to the 50S subunit in the 70S ribosome.

Its function is as follows. Located at the top of the head of the 30S subunit, it contacts several helices of the 16S rRNA. In the 70S ribosome it contacts the 23S rRNA (bridge B1a) and protein L5 of the 50S subunit (bridge B1b), connecting the 2 subunits; these bridges are implicated in subunit movement. Contacts the tRNAs in the A and P-sites. The chain is Small ribosomal subunit protein uS13 from Aromatoleum aromaticum (strain DSM 19018 / LMG 30748 / EbN1) (Azoarcus sp. (strain EbN1)).